The following is a 717-amino-acid chain: Delta-1-pyrroline-5-carboxylate synthase (717 aa).

The interval 1–296 (MDAVDSTRAF…WAPVGDVGAR (296 aa)) is glutamate 5-kinase. Ser-60, Asp-157, and Asn-176 together coordinate substrate. ATP is bound by residues 196–197 (SD) and 236–242 (RGGMTAK). The interval 297–717 (DMAVAARESS…YTHKDLTSHA (421 aa)) is gamma-glutamyl phosphate reductase.

The protein in the N-terminal section; belongs to the glutamate 5-kinase family. In the C-terminal section; belongs to the gamma-glutamyl phosphate reductase family. As to expression, expressed at high levels in leaves and is inducible in roots subjected to salt stress.

It carries out the reaction L-glutamate + ATP = L-glutamyl 5-phosphate + ADP. The catalysed reaction is L-glutamate 5-semialdehyde + phosphate + NADP(+) = L-glutamyl 5-phosphate + NADPH + H(+). It functions in the pathway amino-acid biosynthesis; L-proline biosynthesis; L-glutamate 5-semialdehyde from L-glutamate: step 1/2. Its pathway is amino-acid biosynthesis; L-proline biosynthesis; L-glutamate 5-semialdehyde from L-glutamate: step 2/2. Its activity is regulated as follows. Feedback regulated by proline. P5CS plays a key role in proline biosynthesis, leading to osmoregulation in plants. This is Delta-1-pyrroline-5-carboxylate synthase from Actinidia deliciosa (Kiwi).